Consider the following 437-residue polypeptide: Phosphomethylpyrimidine synthase (437 aa).

Substrate contacts are provided by residues Asn69, Met98, Tyr127, His163, 185–187 (SRG), 226–229 (DALR), and Glu265. His269 is a binding site for Zn(2+). Tyr292 provides a ligand contact to substrate. Zn(2+) is bound at residue His333. The [4Fe-4S] cluster site is built by Cys409, Cys412, and Cys416.

This sequence belongs to the ThiC family. [4Fe-4S] cluster serves as cofactor.

It carries out the reaction 5-amino-1-(5-phospho-beta-D-ribosyl)imidazole + S-adenosyl-L-methionine = 4-amino-2-methyl-5-(phosphooxymethyl)pyrimidine + CO + 5'-deoxyadenosine + formate + L-methionine + 3 H(+). The protein operates within cofactor biosynthesis; thiamine diphosphate biosynthesis. In terms of biological role, catalyzes the synthesis of the hydroxymethylpyrimidine phosphate (HMP-P) moiety of thiamine from aminoimidazole ribotide (AIR) in a radical S-adenosyl-L-methionine (SAM)-dependent reaction. In Alkaliphilus oremlandii (strain OhILAs) (Clostridium oremlandii (strain OhILAs)), this protein is Phosphomethylpyrimidine synthase.